Consider the following 389-residue polypeptide: Tubby-like F-box protein 11 (389 aa).

Residues 36 to 82 (DYRWSEIPEELLREILIRVEAADGGGWPSRRSVVACAGVCRGWRLLM) enclose the F-box domain. The disordered stretch occupies residues 250–289 (STMEPQGVASEPSEFPLLGTRSTLSRSQSKPLRSSSSHLK). The span at 273 to 286 (LSRSQSKPLRSSSS) shows a compositional bias: low complexity.

This sequence belongs to the TUB family. As to expression, ubiquitous.

The sequence is that of Tubby-like F-box protein 11 from Arabidopsis thaliana (Mouse-ear cress).